We begin with the raw amino-acid sequence, 278 residues long: Large ribosomal subunit protein uL24m (278 aa).

One can recognise a KOW domain in the interval 109–142; sequence FFPGDLVQVMVGKDKGRQGLVLTISRDSSEVVVD.

The protein belongs to the universal ribosomal protein uL24 family.

It is found in the mitochondrion. The chain is Large ribosomal subunit protein uL24m (mrpl-24) from Caenorhabditis briggsae.